An 88-amino-acid chain; its full sequence is Probable oxaloacetate decarboxylase gamma chain (88 aa).

A helical transmembrane segment spans residues 13–35 (LMFSGMGFVIIFLLILIWAIGIV).

Belongs to the OadG family. Heterotrimer of an alpha, a beta and a gamma subunit. Na(+) is required as a cofactor.

The protein localises to the cell membrane. It catalyses the reaction oxaloacetate + 2 Na(+)(in) + H(+) = pyruvate + 2 Na(+)(out) + CO2. Functionally, catalyzes the decarboxylation of oxaloacetate coupled to Na(+) translocation. The sequence is that of Probable oxaloacetate decarboxylase gamma chain from Mannheimia succiniciproducens (strain KCTC 0769BP / MBEL55E).